We begin with the raw amino-acid sequence, 140 residues long: Ergosterol biosynthetic protein 28 homolog (140 aa).

4 helical membrane passes run phenylalanine 4 to leucine 24, threonine 52 to histidine 72, isoleucine 79 to glycine 99, and isoleucine 105 to leucine 125.

This sequence belongs to the ERG28 family. Ubiquitous; strongly expressed in testis and some cancer cell lines.

It localises to the endoplasmic reticulum membrane. This is Ergosterol biosynthetic protein 28 homolog from Homo sapiens (Human).